Reading from the N-terminus, the 341-residue chain is NADH-quinone oxidoreductase subunit H 1 (341 aa).

8 helical membrane-spanning segments follow: residues 13 to 33 (LVVI…IAYI), 82 to 102 (GLFL…WAVI), 115 to 135 (VGVL…IMAG), 161 to 181 (IGFV…TAIV), 190 to 210 (MLGW…VSAL), 248 to 268 (YVAI…GWLP), 277 to 297 (WVPG…LFAM), and 313 to 333 (LGWK…ASVL).

Belongs to the complex I subunit 1 family. As to quaternary structure, NDH-1 is composed of 14 different subunits. Subunits NuoA, H, J, K, L, M, N constitute the membrane sector of the complex.

It localises to the cell inner membrane. It carries out the reaction a quinone + NADH + 5 H(+)(in) = a quinol + NAD(+) + 4 H(+)(out). In terms of biological role, NDH-1 shuttles electrons from NADH, via FMN and iron-sulfur (Fe-S) centers, to quinones in the respiratory chain. The immediate electron acceptor for the enzyme in this species is believed to be ubiquinone. Couples the redox reaction to proton translocation (for every two electrons transferred, four hydrogen ions are translocated across the cytoplasmic membrane), and thus conserves the redox energy in a proton gradient. This subunit may bind ubiquinone. This is NADH-quinone oxidoreductase subunit H 1 from Rhodopseudomonas palustris (strain ATCC BAA-98 / CGA009).